We begin with the raw amino-acid sequence, 271 residues long: Phosphatidylglycerol--prolipoprotein diacylglyceryl transferase (271 aa).

The next 7 helical transmembrane spans lie at 25-45 (WYGIMYVIALLLALLLAKFFV), 60-80 (YFIWVEIGVILGARLGYILIY), 103-123 (FVGIRGMSYHGAIIGFLIATL), 134-154 (WIFLDLVALSVPLAYVFGRIG), 181-201 (PSQLYEAFLEGIVVFIIVYLA), 209-229 (GELILVYAGAYSLARFICEFY), and 235-255 (GIGFVLWGMSMGQILSFIMFI). R152 is an a 1,2-diacyl-sn-glycero-3-phospho-(1'-sn-glycerol) binding site.

Belongs to the Lgt family.

The protein localises to the cell inner membrane. The enzyme catalyses L-cysteinyl-[prolipoprotein] + a 1,2-diacyl-sn-glycero-3-phospho-(1'-sn-glycerol) = an S-1,2-diacyl-sn-glyceryl-L-cysteinyl-[prolipoprotein] + sn-glycerol 1-phosphate + H(+). Its pathway is protein modification; lipoprotein biosynthesis (diacylglyceryl transfer). Catalyzes the transfer of the diacylglyceryl group from phosphatidylglycerol to the sulfhydryl group of the N-terminal cysteine of a prolipoprotein, the first step in the formation of mature lipoproteins. This chain is Phosphatidylglycerol--prolipoprotein diacylglyceryl transferase, found in Campylobacter jejuni subsp. jejuni serotype O:6 (strain 81116 / NCTC 11828).